The chain runs to 1219 residues: N-acetylglucosamine-1-phosphotransferase subunits alpha/beta (1219 aa).

The helical transmembrane segment at L27–V47 threads the bilayer. 5 N-linked (GlcNAc...) asparagine glycosylation sites follow: N88, N119, N153, N292, and N381. Intrachain disulfides connect C443-C466, C457-C473, C508-C531, and C522-C538. LNR repeat units follow at residues C443–R478 and C508–C538. Ca(2+) is bound at residue D454. Residue N462 is glycosylated (N-linked (GlcNAc...) asparagine). Residues D469, D472, D519, D534, and D537 each contribute to the Ca(2+) site. N554, N610, N617, N645, N696, N726, N823, and N974 each carry an N-linked (GlcNAc...) asparagine glycan. Residues E640–P666 form a disordered region. The DMAP1-binding domain occupies N696–R804. Positions V970–L1005 constitute an EF-hand domain. Ca(2+) contacts are provided by D983, D985, S987, and E994. N-linked (GlcNAc...) asparagine glycans are attached at residues N1021, N1029, and N1094. A helical membrane pass occupies residues V1180–L1200.

The protein belongs to the stealth family. Hexamer of two alpha, two beta and two gamma (GNPTG) subunits; disulfide-linked. The alpha and/or the beta subunits of the enzyme constitute the catalytic subunits. The alpha- and beta-subunits are generated by a proteolytic cleavage by mbtps1 protease at the Gln-893-Asp-894 bond.

Its subcellular location is the golgi apparatus membrane. It carries out the reaction N(4)-[alpha-D-mannosyl-(1-&gt;2)-alpha-D-mannosyl-(glycan)]-L-asparaginyl-[protein] + UDP-N-acetyl-alpha-D-glucosamine = N(4)-[6-(N-acetyl-alpha-D-glucosaminyl-1-phospho)-alpha-D-mannosyl-(1-&gt;2)-alpha-D-mannosyl-(glycan)]-L-asparaginyl-[protein] + UMP + H(+). In terms of biological role, catalyzes the formation of mannose 6-phosphate (M6P) markers on high mannose type oligosaccharides in the Golgi apparatus. M6P residues are required to bind to the M6P receptors (MPR), which mediate the vesicular transport of lysosomal enzymes to the endosomal/prelysosomal compartment. The sequence is that of N-acetylglucosamine-1-phosphotransferase subunits alpha/beta (gnptab) from Danio rerio (Zebrafish).